A 354-amino-acid chain; its full sequence is MGFPRIISKNNKIYTKLGAFCLSGDGQQFWIVCHTCQEELQTQDKFWKHIQDEHNFMHGPKQEQGRTAAQAYMEAAEAAAMTPLPLYRKVSENDQQRDDVVSTEDEDMQKEPKDYTEMRAHDDQQQTAAVAIDIKLEPSSLSQQSAVQAQQQQQQQQQQQQQQQQQQQQQEQLQQQQQQQQTQQIEITTPLMYQIPQVHPPVSAYAALVQAPAINTLNMSVAAAAAAVASNQVPSTMANLLPQELQYKQELQYKQEVQQHKESTNNSTTASASSAMSSDDGERFYICDFENCGLKFKYHSRLELHRSVHSKVRRFACEICGASFKQSCNLSTHRKKKHALKGTTKATLVPSQSF.

The C2H2-type 1 zinc-finger motif lies at 31-54; that stretch reads IVCHTCQEELQTQDKFWKHIQDEH. Disordered regions lie at residues 84-124 and 256-276; these read LPLY…HDDQ and EVQQ…SSAM. Composition is skewed to basic and acidic residues over residues 89 to 100 and 109 to 124; these read KVSENDQQRDDV and QKEP…HDDQ. A compositionally biased stretch (low complexity) spans 264-276; sequence TNNSTTASASSAM. C2H2-type zinc fingers lie at residues 285 to 309 and 315 to 338; these read YICD…RSVH and FACE…KKKH.

Homooctamer. Fat body.

It localises to the nucleus. Its function is as follows. May be a transcription factor for genes having (A+T) stretches in their promoter and/or enhancer regions. Binds to AT rich DNA. This Sarcophaga peregrina (Flesh fly) protein is AT-rich binding protein.